The primary structure comprises 372 residues: Tomoregulin-1 (372 aa).

The signal sequence occupies residues 1–36 (MGAQAPLRLPAAPPLAVCGYTSVLLLFAFCLPGSRA). Residues 37–322 (SNQPAGGGGD…VPSRQKLTHV (286 aa)) are Extracellular-facing. The N-linked (GlcNAc...) asparagine glycan is linked to Asn55. Positions 90–137 (ACQFQCHTNYIPVCGSNGDTYQNECFLRRAACKHQKDITVVARGPCYS) constitute a Kazal-like 1 domain. Intrachain disulfides connect Cys91-Cys121, Cys95-Cys114, and Cys103-Cys135. Asn139 carries N-linked (GlcNAc...) asparagine glycosylation. A disordered region spans residues 139 to 161 (NGSGSGEGEEEGSGAGAHRKHSK). The region spanning 181 to 229 (VCNIDCSGYSFNPVCASDGSSYNNPCFVREASCIKQEQIDIRHLGHCTD) is the Kazal-like 2 domain. 6 disulfide bridges follow: Cys182–Cys213, Cys186–Cys206, Cys195–Cys227, Cys267–Cys280, Cys275–Cys291, and Cys293–Cys302. The EGF-like domain maps to 263 to 303 (SHMPCPENLNGYCIHGKCEFIYSTQKASCRCESGYTGQHCE). A helical transmembrane segment spans residues 323–343 (LIAAIIGAVQIAIIVAIVMCI). The Cytoplasmic segment spans residues 344–372 (TRKCPKNNRGRRQKQNLGHFTSDTSSRMV). A disordered region spans residues 351–372 (NRGRRQKQNLGHFTSDTSSRMV). The segment covering 358–372 (QNLGHFTSDTSSRMV) has biased composition (polar residues).

It belongs to the tomoregulin family. As to quaternary structure, may interact with ST14. Maily expressed in neurons. Expressed in brain, neurointermediate lobe, pars distalis, pancreas, ovary and testis.

The protein localises to the cell membrane. Its function is as follows. Neuron-specific restriction factor that prevents herpes simplex virus 1 (HHV-1) infection in the brain by blocking viral entry. Also able to restrict herpes simplex virus 2 (HHV-2) infection, although to a lesser extent. Acts by preventing the association between the viral glycoprotein D (gD) and its cell surface receptor NECTIN1, thereby inhibiting fusion of the virus and the cell membrane. Also able to prevent the association between the viral glycoprotein B (gB) and MYH9/NMMHC-IIA and MYH10/NMMHC-IIB receptors. The protein is Tomoregulin-1 of Mus musculus (Mouse).